A 177-amino-acid polypeptide reads, in one-letter code: LOB domain-containing protein 33 (177 aa).

In terms of domain architecture, LOB spans 6–108; it reads SSCGACKFLR…EEIEFLGSQM (103 aa).

The protein belongs to the LOB domain-containing protein family. As to expression, expressed in roots.

This is LOB domain-containing protein 33 (LBD33) from Arabidopsis thaliana (Mouse-ear cress).